The sequence spans 216 residues: Guanylate kinase (216 aa).

Residues 11 to 189 form the Guanylate kinase-like domain; it reads GVLIVISGPS…AVKKIEAILL (179 aa). Position 18 to 25 (18 to 25) interacts with ATP; it reads GPSGAGKG.

This sequence belongs to the guanylate kinase family.

The protein localises to the cytoplasm. The enzyme catalyses GMP + ATP = GDP + ADP. In terms of biological role, essential for recycling GMP and indirectly, cGMP. In Clostridium perfringens (strain SM101 / Type A), this protein is Guanylate kinase.